The chain runs to 54 residues: Large ribosomal subunit protein bL33A (54 aa).

Belongs to the bacterial ribosomal protein bL33 family.

The sequence is that of Large ribosomal subunit protein bL33A from Mycolicibacterium gilvum (strain PYR-GCK) (Mycobacterium gilvum (strain PYR-GCK)).